A 730-amino-acid chain; its full sequence is Nitrogen fixation protein FixI (730 aa).

Topologically, residues 1-101 are cytoplasmic; that stretch reads MHVTRDFSHY…AEVAEVAESR (101 aa). Residues 19 to 85 enclose the HMA domain; that stretch reads KHIDLAVEGV…RLEELGYKAY (67 aa). A metal cation is bound by residues C30 and C33. A helical transmembrane segment spans residues 102-123; sequence FLLRCLGVAAFATMNVMMLSIP. Topologically, residues 124–138 are extracellular; sequence VWSGNVSDMLPEQRD. Residues 139–162 form a helical membrane-spanning segment; it reads FFHWLSALIALPAAAYAGQPFFRS. Residues 163–168 lie on the Cytoplasmic side of the membrane; the sequence is AWRALS. The chain crosses the membrane as a helical span at residues 169-190; that stretch reads AKTTNMDVPISIGVILALGMSV. The Extracellular segment spans residues 191–202; the sequence is VETIHHAEHAYF. Residues 203-223 traverse the membrane as a helical segment; the sequence is DAAIMLLTFLLVGRFLDQNMR. Residues 224-352 lie on the Cytoplasmic side of the membrane; sequence RRTRAVAGNL…RSRYMRLADR (129 aa). Residues 353 to 375 traverse the membrane as a helical segment; that stretch reads ASRLYAPVVHATALITILGWVIA. The Extracellular portion of the chain corresponds to 376–382; that stretch reads GASWHDA. A helical transmembrane segment spans residues 383–400; the sequence is IVTGVAVLIITCPCALGL. Residues 401–676 are Cytoplasmic-facing; the sequence is AIPTVQTVAS…DSARKALHLM (276 aa). D438 (4-aspartylphosphate intermediate) is an active-site residue. Positions 622 and 626 each coordinate Mg(2+). The chain crosses the membrane as a helical span at residues 677–696; that stretch reads RQNLWLAIGYNVLAVPVAIS. Topologically, residues 697–701 are extracellular; sequence GVVTP. Residues 702-720 traverse the membrane as a helical segment; that stretch reads LIAAAAMSGSSILVMLNSL. Topologically, residues 721-730 are cytoplasmic; the sequence is RARSDSREIV.

The protein belongs to the cation transport ATPase (P-type) (TC 3.A.3) family. Type IB subfamily.

The protein localises to the cell membrane. It carries out the reaction ATP + H2O = ADP + phosphate + H(+). Functionally, fixI is a pump of a specific cation involved in symbiotic nitrogen fixation. The four proteins FixG, FixH, FixI, and FixS may participate in a membrane-bound complex coupling the FixI cation pump with a redox process catalyzed by FixG. This Bradyrhizobium diazoefficiens (strain JCM 10833 / BCRC 13528 / IAM 13628 / NBRC 14792 / USDA 110) protein is Nitrogen fixation protein FixI (fixI).